The chain runs to 150 residues: FAD synthase (150 aa).

ATP contacts are provided by residues 20–21 (TF), 25–28 (HPGH), and Asp-103.

Belongs to the archaeal FAD synthase family. As to quaternary structure, homodimer. A divalent metal cation is required as a cofactor.

It carries out the reaction FMN + ATP + H(+) = FAD + diphosphate. The protein operates within cofactor biosynthesis; FAD biosynthesis; FAD from FMN: step 1/1. Its function is as follows. Catalyzes the transfer of the AMP portion of ATP to flavin mononucleotide (FMN) to produce flavin adenine dinucleotide (FAD) coenzyme. In Methanohalobium evestigatum (strain ATCC BAA-1072 / DSM 3721 / NBRC 107634 / OCM 161 / Z-7303), this protein is FAD synthase.